The sequence spans 1024 residues: SAC3 family protein 1 (1024 aa).

Residues 1-62 form a disordered region; it reads MEKRNETGNN…QDSRQKRFSS (62 aa). Over residues 11 to 21 the composition is skewed to basic residues; sequence RLKRSNNRGKS. Over residues 22–38 the composition is skewed to basic and acidic residues; that stretch reads KKDWKDASVETTPRETS. The segment covering 39–52 has biased composition (acidic residues); it reads VDEDNTSVFEDVEA. The region spanning 243 to 433 is the PCI domain; sequence EVEQLRKGIL…NKTAFFNDSK (191 aa). The residue at position 841 (S841) is a Phosphoserine. Residues 945–1022 are a coiled coil; that stretch reads AQLEELEVVR…ARDLLKKVET (78 aa).

It belongs to the SAC3 family.

It is found in the cytoplasm. The protein localises to the nucleus envelope. This is SAC3 family protein 1 from Schizosaccharomyces pombe (strain 972 / ATCC 24843) (Fission yeast).